We begin with the raw amino-acid sequence, 84 residues long: Small ribosomal subunit protein bS18A (84 aa).

The protein belongs to the bacterial ribosomal protein bS18 family. Part of the 30S ribosomal subunit. Forms a tight heterodimer with protein bS6.

In terms of biological role, binds as a heterodimer with protein bS6 to the central domain of the 16S rRNA, where it helps stabilize the platform of the 30S subunit. The sequence is that of Small ribosomal subunit protein bS18A from Frankia alni (strain DSM 45986 / CECT 9034 / ACN14a).